The sequence spans 523 residues: MTNIHNHKILILDFGSQYTQLIARRVREIGVYCELWAWDVTEEQIREFNPTGIILSGGPESTTEENSPRAPEYVFNAGVPVLGICYGMQTMAMQLGGLTETSDHREFGYASVDLQATDALFAKLNDNLTASEPKLDVWMSHGDKVTRLPQGFQVTGITPTCPIAAMSDESRRFYGVQFHPEVTHTKSGLELLTNFVVGICGCECKWTAENIIEDAVARIKEQVGDDEVILGLSGGVDSSVTALLLHRAIGKNLHCVFVDNGLLRLNEGDQVMEMFGDKFGLNIIRVNAEDRFLDALKGIDEPEAKRKTIGKVFVDVFDDESKKLTSVKWLAQGTIYPDVIESAASKTGKAHVIKSHHNVGGLPDYMKLGLVEPLRELFKDEVRKIGLALGLPAEMLNRHPFPGPGLGVRVLGEIKKEYCDLLRKADAIFIEELYKADWYYKVSQAFTVFLPVKSVGVMGDGRKYDWVVSLRAVETIDFMTAHWAHLPYDLLGKISNRIINEVNGISRVVYDVSGKPPATIEWE.

The Glutamine amidotransferase type-1 domain occupies 8–205 (KILILDFGSQ…VVGICGCECK (198 aa)). Cys85 acts as the Nucleophile in catalysis. Residues His179 and Glu181 contribute to the active site. The GMPS ATP-PPase domain maps to 206 to 398 (WTAENIIEDA…LGLPAEMLNR (193 aa)). Position 233–239 (233–239 (SGGVDSS)) interacts with ATP.

Homodimer.

The catalysed reaction is XMP + L-glutamine + ATP + H2O = GMP + L-glutamate + AMP + diphosphate + 2 H(+). It participates in purine metabolism; GMP biosynthesis; GMP from XMP (L-Gln route): step 1/1. In terms of biological role, catalyzes the synthesis of GMP from XMP. This Actinobacillus pleuropneumoniae serotype 3 (strain JL03) protein is GMP synthase [glutamine-hydrolyzing].